The chain runs to 491 residues: Aspartyl/glutamyl-tRNA(Asn/Gln) amidotransferase subunit B (491 aa).

This sequence belongs to the GatB/GatE family. GatB subfamily. In terms of assembly, heterotrimer of A, B and C subunits.

It catalyses the reaction L-glutamyl-tRNA(Gln) + L-glutamine + ATP + H2O = L-glutaminyl-tRNA(Gln) + L-glutamate + ADP + phosphate + H(+). The enzyme catalyses L-aspartyl-tRNA(Asn) + L-glutamine + ATP + H2O = L-asparaginyl-tRNA(Asn) + L-glutamate + ADP + phosphate + 2 H(+). Functionally, allows the formation of correctly charged Asn-tRNA(Asn) or Gln-tRNA(Gln) through the transamidation of misacylated Asp-tRNA(Asn) or Glu-tRNA(Gln) in organisms which lack either or both of asparaginyl-tRNA or glutaminyl-tRNA synthetases. The reaction takes place in the presence of glutamine and ATP through an activated phospho-Asp-tRNA(Asn) or phospho-Glu-tRNA(Gln). This is Aspartyl/glutamyl-tRNA(Asn/Gln) amidotransferase subunit B from Burkholderia cenocepacia (strain HI2424).